Here is a 932-residue protein sequence, read N- to C-terminus: Chaperone protein ClpC3, chloroplastic (932 aa).

The interval 1 to 20 is disordered; that stretch reads MERTLLNPPPSLRSPACRTT. A chloroplast-targeting transit peptide spans 1-48; the sequence is MERTLLNPPPSLRSPACRTTTATRIRPSSSMATMIPTPPPMRHARLVK. Residues 99–240 enclose the Clp R domain; the sequence is FDMFTDKAIK…RSEVIRMISD (142 aa). 2 repeat regions span residues 102-167 and 177-240; these read FTDK…AGRG and FTPA…MISD. The tract at residues 264 to 511 is i; it reads LLEYGTNLTK…LVRLRNAQLP (248 aa). 309-316 contributes to the ATP binding site; that stretch reads GEPGVGKT. Residues 518 to 553 form the UVR domain; the sequence is EKKLKKIMAEKSEAIRSQDFEKAGALRGEEVELKSE. The interval 579 to 770 is II; the sequence is VTEADVQHIV…LIIMTSNVGS (192 aa). 653–660 contributes to the ATP binding site; that stretch reads GPTGVGKS.

It belongs to the ClpA/ClpB family. ClpC subfamily.

Its subcellular location is the plastid. It localises to the chloroplast. In terms of biological role, molecular chaperone that may interact with a ClpP-like protease involved in degradation of denatured proteins in the chloroplast. The polypeptide is Chaperone protein ClpC3, chloroplastic (CLPC3) (Oryza sativa subsp. japonica (Rice)).